A 340-amino-acid chain; its full sequence is Nicotinate-nucleotide--dimethylbenzimidazole phosphoribosyltransferase (340 aa).

Glutamate 305 functions as the Proton acceptor in the catalytic mechanism.

Belongs to the CobT family.

It catalyses the reaction 5,6-dimethylbenzimidazole + nicotinate beta-D-ribonucleotide = alpha-ribazole 5'-phosphate + nicotinate + H(+). The protein operates within nucleoside biosynthesis; alpha-ribazole biosynthesis; alpha-ribazole from 5,6-dimethylbenzimidazole: step 1/2. Its function is as follows. Catalyzes the synthesis of alpha-ribazole-5'-phosphate from nicotinate mononucleotide (NAMN) and 5,6-dimethylbenzimidazole (DMB). This Allorhizobium ampelinum (strain ATCC BAA-846 / DSM 112012 / S4) (Agrobacterium vitis (strain S4)) protein is Nicotinate-nucleotide--dimethylbenzimidazole phosphoribosyltransferase.